The primary structure comprises 360 residues: Mannose-1-phosphate guanylyltransferase catalytic subunit beta (360 aa).

The segment at 2–222 (KALILVGGYG…QGFWMDIGQP (221 aa)) is substrate-binding domain. Asp110 provides a ligand contact to GDP-alpha-D-mannose. Asp110 lines the Mg(2+) pocket. The active site involves Lys162. A GDP-alpha-D-mannose-binding site is contributed by Asp218. Asp218 is a Mg(2+) binding site. The interval 245-360 (RAGPGFLGNV…DSVPEPRIIM (116 aa)) is hexapeptide repeat domain.

Belongs to the transferase hexapeptide repeat family. As to quaternary structure, component of the GMPPA-GMPPB mannose-1-phosphate guanylyltransferase complex composed of 4 gmppa subunits and 8 gmppb subunits; the complex is organized into three layers, a central layer made up of 2 gmppa dimers sandwiched between two layers each made up of 2 gmppb dimers. Catalytic activity of gmppb is reduced when part of the complex and binding of GDP-alpha-D-Mannose by gmppa induces allosteric feedback inhibition of gmppb. It depends on Mg(2+) as a cofactor.

It catalyses the reaction alpha-D-mannose 1-phosphate + GTP + H(+) = GDP-alpha-D-mannose + diphosphate. The protein operates within nucleotide-sugar biosynthesis; GDP-alpha-D-mannose biosynthesis; GDP-alpha-D-mannose from alpha-D-mannose 1-phosphate (GTP route): step 1/1. With respect to regulation, enzyme activity is reduced by incorporation into the GMPPA-GMPPB mannose-1-phosphate guanylyltransferase complex. Allosterically inhibited, when part of the GMPPA-GMPPB complex, by GDP-alpha-D-mannose binding to GMPPA. Its function is as follows. Catalytic subunit of the GMPPA-GMPPB mannose-1-phosphate guanylyltransferase complex. Catalyzes the formation of GDP-mannose, an essential precursor of glycan moieties of glycoproteins and glycolipids. Can catalyze the reverse reaction in vitro. Together with GMPPA regulates GDP-alpha-D-mannose levels. This is Mannose-1-phosphate guanylyltransferase catalytic subunit beta (gmppb) from Danio rerio (Zebrafish).